Here is a 264-residue protein sequence, read N- to C-terminus: MDLIHVVVLALIQGITEFLPISSSAHLILPKEILGWPDQGLAFDVAVHVGTLTAVAVYFRNDIGKIIIGWLSSVTGRGTDESGRLGWYLIAATIPAALFGLIFDDLIETHLRSTDVIATTTLVFGVLLWVADRKPAETKQLRDIALSTAMIIGLAQAVALIPGTSRSGITITAALFLGLCRTDAARFSFLLSIPVIVLSGGYKGLQLVLSAAAVDWLAIGLGIALSAVSAYICIHYFLNFINRIGMLPFVIYRLLLGVLLFIAV.

8 helical membrane passes run 1-21 (MDLIHVVVLALIQGITEFLPI), 39-59 (QGLAFDVAVHVGTLTAVAVYF), 87-107 (WYLIAATIPAALFGLIFDDLI), 111-131 (LRSTDVIATTTLVFGVLLWVA), 144-164 (IALSTAMIIGLAQAVALIPGT), 187-207 (FSFLLSIPVIVLSGGYKGLQL), 208-228 (VLSAAAVDWLAIGLGIALSAV), and 244-264 (IGMLPFVIYRLLLGVLLFIAV).

The protein belongs to the UppP family.

It is found in the cell inner membrane. The enzyme catalyses di-trans,octa-cis-undecaprenyl diphosphate + H2O = di-trans,octa-cis-undecaprenyl phosphate + phosphate + H(+). In terms of biological role, catalyzes the dephosphorylation of undecaprenyl diphosphate (UPP). Confers resistance to bacitracin. This is Undecaprenyl-diphosphatase from Teredinibacter turnerae (strain ATCC 39867 / T7901).